The sequence spans 903 residues: HTH-type transcriptional regulator MalT (903 aa).

39–46 (CPAGYGKT) lines the ATP pocket. Residues 832 to 897 (ELIRTSPLTQ…DAVQQAQRLL (66 aa)) form the HTH luxR-type domain. Residues 856-875 (NDQIAGELEVAATTIKTHIR) constitute a DNA-binding region (H-T-H motif).

It belongs to the MalT family. In terms of assembly, monomer in solution. Oligomerizes to an active state in the presence of the positive effectors ATP and maltotriose.

Activated by ATP and maltotriose, which are both required for DNA binding. Positively regulates the transcription of the maltose regulon whose gene products are responsible for uptake and catabolism of malto-oligosaccharides. Specifically binds to the promoter region of its target genes, recognizing a short DNA motif called the MalT box. This is HTH-type transcriptional regulator MalT from Yersinia enterocolitica serotype O:8 / biotype 1B (strain NCTC 13174 / 8081).